Here is a 337-residue protein sequence, read N- to C-terminus: Ketol-acid reductoisomerase (NADP(+)) (337 aa).

The KARI N-terminal Rossmann domain maps to V3–T183. NADP(+) contacts are provided by residues Y26–Q29, S52, S54, and D84–Q87. The active site involves H109. G135 provides a ligand contact to NADP(+). One can recognise a KARI C-terminal knotted domain in the interval T184–V329. Residues D192, E196, E228, and E232 each contribute to the Mg(2+) site. Position 253 (S253) interacts with substrate.

Belongs to the ketol-acid reductoisomerase family. It depends on Mg(2+) as a cofactor.

The catalysed reaction is (2R)-2,3-dihydroxy-3-methylbutanoate + NADP(+) = (2S)-2-acetolactate + NADPH + H(+). It carries out the reaction (2R,3R)-2,3-dihydroxy-3-methylpentanoate + NADP(+) = (S)-2-ethyl-2-hydroxy-3-oxobutanoate + NADPH + H(+). The protein operates within amino-acid biosynthesis; L-isoleucine biosynthesis; L-isoleucine from 2-oxobutanoate: step 2/4. It participates in amino-acid biosynthesis; L-valine biosynthesis; L-valine from pyruvate: step 2/4. In terms of biological role, involved in the biosynthesis of branched-chain amino acids (BCAA). Catalyzes an alkyl-migration followed by a ketol-acid reduction of (S)-2-acetolactate (S2AL) to yield (R)-2,3-dihydroxy-isovalerate. In the isomerase reaction, S2AL is rearranged via a Mg-dependent methyl migration to produce 3-hydroxy-3-methyl-2-ketobutyrate (HMKB). In the reductase reaction, this 2-ketoacid undergoes a metal-dependent reduction by NADPH to yield (R)-2,3-dihydroxy-isovalerate. The protein is Ketol-acid reductoisomerase (NADP(+)) of Salinispora tropica (strain ATCC BAA-916 / DSM 44818 / JCM 13857 / NBRC 105044 / CNB-440).